Here is a 381-residue protein sequence, read N- to C-terminus: Spermidine/putrescine import ATP-binding protein PotA (381 aa).

In terms of domain architecture, ABC transporter spans 22 to 252; it reads VELRNVFKFF…PKTSFVADFI (231 aa). 54 to 61 is an ATP binding site; that stretch reads GPSGCGKT.

It belongs to the ABC transporter superfamily. Spermidine/putrescine importer (TC 3.A.1.11.1) family. The complex is composed of two ATP-binding proteins (PotA), two transmembrane proteins (PotB and PotC) and a solute-binding protein (PotD).

It localises to the cell inner membrane. The enzyme catalyses ATP + H2O + polyamine-[polyamine-binding protein]Side 1 = ADP + phosphate + polyamineSide 2 + [polyamine-binding protein]Side 1.. Its function is as follows. Part of the ABC transporter complex PotABCD involved in spermidine/putrescine import. Responsible for energy coupling to the transport system. This chain is Spermidine/putrescine import ATP-binding protein PotA, found in Nostoc sp. (strain PCC 7120 / SAG 25.82 / UTEX 2576).